The sequence spans 278 residues: Probable 3-hydroxybutyryl-CoA dehydrogenase (278 aa).

Belongs to the 3-hydroxyacyl-CoA dehydrogenase family.

The enzyme catalyses (3S)-3-hydroxybutanoyl-CoA + NADP(+) = acetoacetyl-CoA + NADPH + H(+). It participates in lipid metabolism; butanoate metabolism. The chain is Probable 3-hydroxybutyryl-CoA dehydrogenase (hbd) from Deinococcus radiodurans (strain ATCC 13939 / DSM 20539 / JCM 16871 / CCUG 27074 / LMG 4051 / NBRC 15346 / NCIMB 9279 / VKM B-1422 / R1).